The primary structure comprises 74 residues: Lambda-hexatoxin-Hv1d (74 aa).

An N-terminal signal peptide occupies residues 1–22 (MNTATCFIVLLVVATVIGGIEA). Positions 23–35 (GESDMRKDVMGLF) are excised as a propeptide. 4 cysteine pairs are disulfide-bonded: cysteine 40–cysteine 54, cysteine 47–cysteine 59, cysteine 50–cysteine 51, and cysteine 53–cysteine 69.

Belongs to the neurotoxin 11 (kappa toxin) family. As to expression, expressed by the venom gland.

The protein resides in the secreted. Functionally, this excitatory toxin inhibits insect calcium-activated potassium (KCa) channels (Slo-type). In Hadronyche versuta (Blue mountains funnel-web spider), this protein is Lambda-hexatoxin-Hv1d.